A 629-amino-acid polypeptide reads, in one-letter code: Serine/threonine-protein kinase ICK (629 aa).

Positions 4-284 (YTTIKQLGDG…ASQALRYPYF (281 aa)) constitute a Protein kinase domain. Residues 10–18 (LGDGTYGSV) and Lys33 each bind ATP. Asp125 serves as the catalytic Proton acceptor. Thr157 is subject to Phosphothreonine; by CDK7. Tyr159 carries the post-translational modification Phosphotyrosine. Ser161 carries the phosphoserine modification. 3 disordered regions span residues 292-376 (IISK…SLHN), 455-483 (SESV…SSAK), and 581-629 (SSLK…PSRR). The span at 296–306 (DSGKPQREVQD) shows a compositional bias: basic and acidic residues. A compositionally biased stretch (pro residues) spans 309-321 (GPPPYIKPAPPAQ). 2 stretches are compositionally biased toward low complexity: residues 322-344 (APAK…PQHS) and 457-470 (SVGT…QASS).

Belongs to the protein kinase superfamily. CMGC Ser/Thr protein kinase family. CDC2/CDKX subfamily. The cofactor is Mg(2+). In terms of processing, autophosphorylated on serine and threonine residues. Phosphorylation at Thr-157 by CDK7/Cak1p increases kinase activity. In terms of tissue distribution, highly expressed in colon and lung, lower levels present in heart, esophagus, stomach, small intestine and ovary. Localizes to the crypt region of large and small intestine.

It localises to the cytoplasm. The protein localises to the cytosol. Its subcellular location is the cell projection. It is found in the cilium. The protein resides in the nucleus. It localises to the cytoskeleton. The protein localises to the cilium basal body. It carries out the reaction L-seryl-[protein] + ATP = O-phospho-L-seryl-[protein] + ADP + H(+). It catalyses the reaction L-threonyl-[protein] + ATP = O-phospho-L-threonyl-[protein] + ADP + H(+). Functionally, has an essential role in ciliogenesis, particularly in neuronal and retinal progenitor cells. Phosphorylates KIF3A. Involved in the control of ciliary length. Regulates the ciliary localization of SHH pathway components as well as the localization of IFT components at ciliary tips. May play a role in cardiac development. Regulates intraflagellar transport (IFT) speed and negatively regulates cilium length in a cAMP and mTORC1 signaling -dependent manner and this regulation requires its kinase activity. This is Serine/threonine-protein kinase ICK (Cilk1) from Mus musculus (Mouse).